A 1435-amino-acid polypeptide reads, in one-letter code: Gag-Pol polyprotein (1435 aa).

A lipid anchor (N-myristoyl glycine; by host) is attached at Gly2. Residues 7–31 (VLSGGKLDRWEKIRLRPGGKKKYKL) are interaction with Gp41. The tract at residues 8–43 (LSGGKLDRWEKIRLRPGGKKKYKLKHIVWASRELER) is interaction with host CALM1. The tract at residues 12–19 (KLDRWEKI) is interaction with host AP3D1. Residues 14-33 (DRWEKIRLRPGGKKKYKLKH) form an interaction with membrane phosphatidylinositol 4,5-bisphosphate and RNA region. A Nuclear export signal motif is present at residues 16-22 (WEKIRLR). Residues 26-32 (KKKYKLK) carry the Nuclear localization signal motif. The interaction with membrane phosphatidylinositol 4,5-bisphosphate stretch occupies residues 73–77 (EECRS). The tract at residues 107–128 (EQNKSKKKAQQAAADTGHSSQV) is disordered. Tyr132 is modified (phosphotyrosine; by host). Positions 189–227 (NTVGGHQAAMQMLKETINEEAAEWDRVHPVHAGPIAPGQ) are interaction with human PPIA/CYPA and NUP153. Residues 277-363 (YSPTSILDIR…GGPGHKARVL (87 aa)) form a dimerization/Multimerization of capsid protein p24 region. 2 CCHC-type zinc fingers span residues 390–407 (VKCF…NCRA) and 411–428 (KGCW…DCTE). Residues 449–481 (SSEQTRANSPTRRELQVWGRDNNSPSEAGADRQ) form a disordered region. Residues 489–493 (PQITL) form a dimerization of protease region. Residues 508-577 (KEALLDTGAD…TPVNIIGRNL (70 aa)) form the Peptidase A2 domain. Catalysis depends on Asp513, which acts as the For protease activity; shared with dimeric partner. Dimerization of protease regions lie at residues 537–543 (GIGGFIK) and 576–588 (NLLT…LNFP). In terms of domain architecture, Reverse transcriptase spans 631–821 (EGKISKIGPE…PPFLWMGYEL (191 aa)). Mg(2+) contacts are provided by Asp697, Asp772, and Asp773. The interval 814–822 (FLWMGYELH) is RT 'primer grip'. The Tryptophan repeat motif motif lies at 985–1001 (WETWWTEYWQATWIPEW). Residues 1021–1144 (IVGAETFYVD…VDKLVSAGIR (124 aa)) form the RNase H type-1 domain. Residues Asp1030, Glu1065, Asp1085, and Asp1136 each contribute to the Mg(2+) site. The Integrase-type zinc-finger motif lies at 1150–1191 (DGIDKAQDEHEKYHSNWRAMASDFNLPPVVAKEIVASCDKCQ). Zn(2+) contacts are provided by His1159, His1163, Cys1187, and Cys1190. One can recognise an Integrase catalytic domain in the interval 1201–1351 (VDCSPGIWQL…SAGERIVDII (151 aa)). Mg(2+) is bound by residues Asp1211, Asp1263, and Glu1299. Positions 1370–1417 (FRVYYRDSRNPLWKGPAKLLWKGEGAVVIQDNSDIKVVPRRKAKIIRD) form a DNA-binding region, integrase-type.

Homotrimer; further assembles as hexamers of trimers. Interacts with gp41 (via C-terminus). Interacts with host CALM1; this interaction induces a conformational change in the Matrix protein, triggering exposure of the myristate group. Interacts with host AP3D1; this interaction allows the polyprotein trafficking to multivesicular bodies during virus assembly. Part of the pre-integration complex (PIC) which is composed of viral genome, matrix protein, Vpr and integrase. As to quaternary structure, homodimer; the homodimer further multimerizes as homohexamers or homopentamers. Interacts with human PPIA/CYPA; This interaction stabilizes the capsid. Interacts with human NUP153. Interacts with host PDZD8; this interaction stabilizes the capsid. Interacts with monkey TRIM5; this interaction destabilizes the capsid. In terms of assembly, homodimer, whose active site consists of two apposed aspartic acid residues. Heterodimer of p66 RT and p51 RT (RT p66/p51). Heterodimerization of RT is essential for DNA polymerase activity. The overall folding of the subdomains is similar in p66 RT and p51 RT but the spatial arrangements of the subdomains are dramatically different. As to quaternary structure, homotetramer; may further associate as a homohexadecamer. Part of the pre-integration complex (PIC) which is composed of viral genome, matrix protein, Vpr and integrase. Interacts with human SMARCB1/INI1 and human PSIP1/LEDGF isoform 1. Interacts with human KPNA3; this interaction might play a role in nuclear import of the pre-integration complex. Interacts with human NUP153; this interaction might play a role in nuclear import of the pre-integration complex. It depends on Mg(2+) as a cofactor. Post-translationally, specific enzymatic cleavages by the viral protease yield mature proteins. The protease is released by autocatalytic cleavage. The polyprotein is cleaved during and after budding, this process is termed maturation. Proteolytic cleavage of p66 RT removes the RNase H domain to yield the p51 RT subunit. Nucleocapsid protein p7 might be further cleaved after virus entry. In terms of processing, tyrosine phosphorylated presumably in the virion by a host kinase. Phosphorylation is apparently not a major regulator of membrane association. Phosphorylated possibly by host MAPK1; this phosphorylation is necessary for Pin1-mediated virion uncoating. Post-translationally, methylated by host PRMT6, impairing its function by reducing RNA annealing and the initiation of reverse transcription.

The protein resides in the host cell membrane. It is found in the host endosome. The protein localises to the host multivesicular body. It localises to the virion membrane. Its subcellular location is the host nucleus. The protein resides in the host cytoplasm. It is found in the virion. The catalysed reaction is Specific for a P1 residue that is hydrophobic, and P1' variable, but often Pro.. It catalyses the reaction Endohydrolysis of RNA in RNA/DNA hybrids. Three different cleavage modes: 1. sequence-specific internal cleavage of RNA. Human immunodeficiency virus type 1 and Moloney murine leukemia virus enzymes prefer to cleave the RNA strand one nucleotide away from the RNA-DNA junction. 2. RNA 5'-end directed cleavage 13-19 nucleotides from the RNA end. 3. DNA 3'-end directed cleavage 15-20 nucleotides away from the primer terminus.. The enzyme catalyses 3'-end directed exonucleolytic cleavage of viral RNA-DNA hybrid.. It carries out the reaction DNA(n) + a 2'-deoxyribonucleoside 5'-triphosphate = DNA(n+1) + diphosphate. Protease: The viral protease is inhibited by many synthetic protease inhibitors (PIs), such as amprenavir, atazanavir, indinavir, loprinavir, nelfinavir, ritonavir and saquinavir. Use of protease inhibitors in tritherapy regimens permit more ambitious therapeutic strategies. Reverse transcriptase/ribonuclease H: RT can be inhibited either by nucleoside RT inhibitors (NRTIs) or by non nucleoside RT inhibitors (NNRTIs). NRTIs act as chain terminators, whereas NNRTIs inhibit DNA polymerization by binding a small hydrophobic pocket near the RT active site and inducing an allosteric change in this region. Classical NRTIs are abacavir, adefovir (PMEA), didanosine (ddI), lamivudine (3TC), stavudine (d4T), tenofovir (PMPA), zalcitabine (ddC), and zidovudine (AZT). Classical NNRTIs are atevirdine (BHAP U-87201E), delavirdine, efavirenz (DMP-266), emivirine (I-EBU), and nevirapine (BI-RG-587). The tritherapies used as a basic effective treatment of AIDS associate two NRTIs and one NNRTI. Mediates, with Gag polyprotein, the essential events in virion assembly, including binding the plasma membrane, making the protein-protein interactions necessary to create spherical particles, recruiting the viral Env proteins, and packaging the genomic RNA via direct interactions with the RNA packaging sequence (Psi). Gag-Pol polyprotein may regulate its own translation, by the binding genomic RNA in the 5'-UTR. At low concentration, the polyprotein would promote translation, whereas at high concentration, the polyprotein would encapsidate genomic RNA and then shut off translation. Functionally, targets the polyprotein to the plasma membrane via a multipartite membrane-binding signal, that includes its myristoylated N-terminus. Matrix protein is part of the pre-integration complex. Implicated in the release from host cell mediated by Vpu. Binds to RNA. In terms of biological role, forms the conical core that encapsulates the genomic RNA-nucleocapsid complex in the virion. Most core are conical, with only 7% tubular. The core is constituted by capsid protein hexamer subunits. The core is disassembled soon after virion entry. Host restriction factors such as TRIM5-alpha or TRIMCyp bind retroviral capsids and cause premature capsid disassembly, leading to blocks in reverse transcription. Capsid restriction by TRIM5 is one of the factors which restricts HIV-1 to the human species. Host PIN1 apparently facilitates the virion uncoating. On the other hand, interactions with PDZD8 or CYPA stabilize the capsid. Its function is as follows. Encapsulates and protects viral dimeric unspliced genomic RNA (gRNA). Binds these RNAs through its zinc fingers. Acts as a nucleic acid chaperone which is involved in rearangement of nucleic acid secondary structure during gRNA retrotranscription. Also facilitates template switch leading to recombination. As part of the polyprotein, participates in gRNA dimerization, packaging, tRNA incorporation and virion assembly. Aspartyl protease that mediates proteolytic cleavages of Gag and Gag-Pol polyproteins during or shortly after the release of the virion from the plasma membrane. Cleavages take place as an ordered, step-wise cascade to yield mature proteins. This process is called maturation. Displays maximal activity during the budding process just prior to particle release from the cell. Also cleaves Nef and Vif, probably concomitantly with viral structural proteins on maturation of virus particles. Hydrolyzes host EIF4GI and PABP1 in order to shut off the capped cellular mRNA translation. The resulting inhibition of cellular protein synthesis serves to ensure maximal viral gene expression and to evade host immune response. Also mediates cleavage of host YTHDF3. Mediates cleavage of host CARD8, thereby activating the CARD8 inflammasome, leading to the clearance of latent HIV-1 in patient CD4(+) T-cells after viral reactivation; in contrast, HIV-1 can evade CARD8-sensing when its protease remains inactive in infected cells prior to viral budding. Functionally, multifunctional enzyme that converts the viral RNA genome into dsDNA in the cytoplasm, shortly after virus entry into the cell. This enzyme displays a DNA polymerase activity that can copy either DNA or RNA templates, and a ribonuclease H (RNase H) activity that cleaves the RNA strand of RNA-DNA heteroduplexes in a partially processive 3' to 5' endonucleasic mode. Conversion of viral genomic RNA into dsDNA requires many steps. A tRNA(3)-Lys binds to the primer-binding site (PBS) situated at the 5'-end of the viral RNA. RT uses the 3' end of the tRNA primer to perform a short round of RNA-dependent minus-strand DNA synthesis. The reading proceeds through the U5 region and ends after the repeated (R) region which is present at both ends of viral RNA. The portion of the RNA-DNA heteroduplex is digested by the RNase H, resulting in a ssDNA product attached to the tRNA primer. This ssDNA/tRNA hybridizes with the identical R region situated at the 3' end of viral RNA. This template exchange, known as minus-strand DNA strong stop transfer, can be either intra- or intermolecular. RT uses the 3' end of this newly synthesized short ssDNA to perform the RNA-dependent minus-strand DNA synthesis of the whole template. RNase H digests the RNA template except for two polypurine tracts (PPTs) situated at the 5'-end and near the center of the genome. It is not clear if both polymerase and RNase H activities are simultaneous. RNase H probably can proceed both in a polymerase-dependent (RNA cut into small fragments by the same RT performing DNA synthesis) and a polymerase-independent mode (cleavage of remaining RNA fragments by free RTs). Secondly, RT performs DNA-directed plus-strand DNA synthesis using the PPTs that have not been removed by RNase H as primers. PPTs and tRNA primers are then removed by RNase H. The 3' and 5' ssDNA PBS regions hybridize to form a circular dsDNA intermediate. Strand displacement synthesis by RT to the PBS and PPT ends produces a blunt ended, linear dsDNA copy of the viral genome that includes long terminal repeats (LTRs) at both ends. In terms of biological role, catalyzes viral DNA integration into the host chromosome, by performing a series of DNA cutting and joining reactions. This enzyme activity takes place after virion entry into a cell and reverse transcription of the RNA genome in dsDNA. The first step in the integration process is 3' processing. This step requires a complex comprising the viral genome, matrix protein, Vpr and integrase. This complex is called the pre-integration complex (PIC). The integrase protein removes 2 nucleotides from each 3' end of the viral DNA, leaving recessed CA OH's at the 3' ends. In the second step, the PIC enters cell nucleus. This process is mediated through integrase and Vpr proteins, and allows the virus to infect a non dividing cell. This ability to enter the nucleus is specific of lentiviruses, other retroviruses cannot and rely on cell division to access cell chromosomes. In the third step, termed strand transfer, the integrase protein joins the previously processed 3' ends to the 5' ends of strands of target cellular DNA at the site of integration. The 5'-ends are produced by integrase-catalyzed staggered cuts, 5 bp apart. A Y-shaped, gapped, recombination intermediate results, with the 5'-ends of the viral DNA strands and the 3' ends of target DNA strands remaining unjoined, flanking a gap of 5 bp. The last step is viral DNA integration into host chromosome. This involves host DNA repair synthesis in which the 5 bp gaps between the unjoined strands are filled in and then ligated. Since this process occurs at both cuts flanking the HIV genome, a 5 bp duplication of host DNA is produced at the ends of HIV-1 integration. Alternatively, Integrase may catalyze the excision of viral DNA just after strand transfer, this is termed disintegration. This Human immunodeficiency virus type 1 group M subtype B (isolate LW123) (HIV-1) protein is Gag-Pol polyprotein (gag-pol).